A 200-amino-acid chain; its full sequence is 6,7-dimethyl-8-ribityllumazine synthase (200 aa).

5-amino-6-(D-ribitylamino)uracil is bound by residues Trp25, 59–61 (SWE), and 119–121 (VLI). Residue 124 to 125 (ET) participates in (2S)-2-hydroxy-3-oxobutyl phosphate binding. The active-site Proton donor is the His127. Phe152 lines the 5-amino-6-(D-ribitylamino)uracil pocket. Arg166 lines the (2S)-2-hydroxy-3-oxobutyl phosphate pocket.

This sequence belongs to the DMRL synthase family. Homopentamer.

The catalysed reaction is (2S)-2-hydroxy-3-oxobutyl phosphate + 5-amino-6-(D-ribitylamino)uracil = 6,7-dimethyl-8-(1-D-ribityl)lumazine + phosphate + 2 H2O + H(+). The protein operates within cofactor biosynthesis; riboflavin biosynthesis; riboflavin from 2-hydroxy-3-oxobutyl phosphate and 5-amino-6-(D-ribitylamino)uracil: step 1/2. Its function is as follows. Catalyzes the formation of 6,7-dimethyl-8-ribityllumazine by condensation of 5-amino-6-(D-ribitylamino)uracil with 3,4-dihydroxy-2-butanone 4-phosphate. This is the penultimate step in the biosynthesis of riboflavin. This chain is 6,7-dimethyl-8-ribityllumazine synthase, found in Pyricularia oryzae (strain 70-15 / ATCC MYA-4617 / FGSC 8958) (Rice blast fungus).